We begin with the raw amino-acid sequence, 790 residues long: Disintegrin and metalloproteinase domain-containing protein 30 (790 aa).

The first 27 residues, 1–27 (MRSVQIFLSQCRLLLLLVPTMLLKSLG), serve as a signal peptide directing secretion. Residues 28-198 (EDVIFHPEGE…KARLRDFPGS (171 aa)) constitute a propeptide that is removed on maturation. A Cysteine switch motif is present at residues 170-177 (QVCGLSDD). Cysteine 172 provides a ligand contact to Zn(2+). At 199–687 (YKHPKYLELI…LRGAIPSSIW (489 aa)) the chain is on the extracellular side. The Peptidase M12B domain occupies 203–393 (KYLELILLFD…SGATCLNNIP (191 aa)). An N-linked (GlcNAc...) asparagine glycan is attached at asparagine 222. 3 cysteine pairs are disulfide-bonded: cysteine 313–cysteine 388, cysteine 353–cysteine 373, and cysteine 355–cysteine 361. Histidine 338 provides a ligand contact to Zn(2+). Residue glutamate 339 is part of the active site. The Zn(2+) site is built by histidine 342 and histidine 348. Asparagine 372, asparagine 438, asparagine 473, and asparagine 625 each carry an N-linked (GlcNAc...) asparagine glycan. A Disintegrin domain is found at 399–485 (LKRCGNKIVE…SCPNDVYKQD (87 aa)). Residues cysteine 457 and cysteine 477 are joined by a disulfide bond. Positions 629–663 (LQFDCLPEKCNTRGVCNNRKNCHCMYGWAPPFCEE) constitute an EGF-like domain. 3 disulfide bridges follow: cysteine 633–cysteine 644, cysteine 638–cysteine 650, and cysteine 652–cysteine 661. Residues 688–708 (VVSIIMFRLILLILSVVFVFF) form a helical membrane-spanning segment. Over 709–790 (RQVIGNHLKP…KAKSVKKQKK (82 aa)) the chain is Cytoplasmic. Residues 720–779 (QEKMPLSKAKTEQEESKTKTVQEESKTKTGQEESEAKTGQEESKAKTGQEESKANIESKR) are compositionally biased toward basic and acidic residues. The disordered stretch occupies residues 720 to 790 (QEKMPLSKAK…KAKSVKKQKK (71 aa)). A run of 5 repeats spans residues 732 to 740 (QEESKTKTV), 741 to 749 (QEESKTKTG), 750 to 758 (QEESEAKTG), 759 to 767 (QEESKAKTG), and 768 to 776 (QEESKANIE). The segment at 732 to 776 (QEESKTKTVQEESKTKTGQEESEAKTGQEESKAKTGQEESKANIE) is 5 X 9 AA approximate repeats. Positions 780–790 (PKAKSVKKQKK) are enriched in basic residues.

Interacts with CTSD; this leads to activation of CTSD. It depends on Zn(2+) as a cofactor. Expressed in brain neurons (at protein level). Expressed in testis.

The protein localises to the late endosome membrane. In terms of biological role, plays a role in lysosomal amyloid precursor protein (APP) processing by cleaving and activating CTSD/cathepsin D which leads to APP degradation. This Homo sapiens (Human) protein is Disintegrin and metalloproteinase domain-containing protein 30 (ADAM30).